A 310-amino-acid polypeptide reads, in one-letter code: tRNA dimethylallyltransferase (310 aa).

19 to 26 is a binding site for ATP; it reads GPTGTGKS. 21–26 provides a ligand contact to substrate; sequence TGTGKS.

This sequence belongs to the IPP transferase family. As to quaternary structure, monomer. The cofactor is Mg(2+).

The catalysed reaction is adenosine(37) in tRNA + dimethylallyl diphosphate = N(6)-dimethylallyladenosine(37) in tRNA + diphosphate. Catalyzes the transfer of a dimethylallyl group onto the adenine at position 37 in tRNAs that read codons beginning with uridine, leading to the formation of N6-(dimethylallyl)adenosine (i(6)A). In Saccharopolyspora erythraea (strain ATCC 11635 / DSM 40517 / JCM 4748 / NBRC 13426 / NCIMB 8594 / NRRL 2338), this protein is tRNA dimethylallyltransferase.